The primary structure comprises 153 residues: Fucose mutarotase (153 aa).

Catalysis depends on histidine 24, which acts as the Proton donor. Aspartate 32 provides a ligand contact to substrate. Aspartate 69 is a catalytic residue. Residues methionine 79, tyrosine 120, tyrosine 138, and asparagine 140 each contribute to the substrate site. The active site involves tyrosine 120.

Belongs to the RbsD / FucU family. In terms of assembly, mainly homodimer, but also exists as homotetramer, homooctamer, and homodecamer. The homodimeric form seems catalytically inactive. Widely expressed in various tissues and cell lines, including kidney, liver, and pancreas, marginally in muscle and testis.

The catalysed reaction is alpha-L-fucose = beta-L-fucose. It participates in carbohydrate metabolism; L-fucose metabolism. Functionally, involved in the interconversion between alpha- and beta-L-fucoses. L-Fucose (6-deoxy-L-galactose) exists as alpha-L-fucose (29.5%) and beta-L-fucose (70.5%), the beta-form is metabolized through the salvage pathway. GDP-L-fucose formed either by the de novo or salvage pathways is transported into the endoplasmic reticulum, where it serves as a substrate for N- and O-glycosylations by fucosyltransferases. Fucosylated structures expressed on cell surfaces or secreted in biological fluids are believed to play a critical role in cell-cell adhesion and recognition processes. The chain is Fucose mutarotase (Fuom) from Mus musculus (Mouse).